Reading from the N-terminus, the 397-residue chain is Major outer membrane porin, serovar L3 (397 aa).

An N-terminal signal peptide occupies residues 1–22 (MKKLLKSVLVFAALSSASSLQA).

It belongs to the chlamydial porin (CP) (TC 1.B.2) family. As to quaternary structure, part of a disulfide cross-linked outer membrane complex (COMC) composed of the major outer membrane porin (MOMP), the small cysteine-rich protein (OmcA) and the large cysteine-rich periplasmic protein (OmcB).

It localises to the cell outer membrane. Its function is as follows. In elementary bodies (EBs, the infectious stage, which is able to survive outside the host cell) provides the structural integrity of the outer envelope through disulfide cross-links with the small cysteine-rich protein and the large cysteine-rich periplasmic protein. It has been described in publications as the Sarkosyl-insoluble COMC (Chlamydia outer membrane complex), and serves as the functional equivalent of peptidoglycan. In terms of biological role, permits diffusion of specific solutes through the outer membrane. The sequence is that of Major outer membrane porin, serovar L3 (ompA) from Chlamydia trachomatis.